A 322-amino-acid chain; its full sequence is NADH-ubiquinone oxidoreductase chain 1 (322 aa).

Helical transmembrane passes span 4–24, 73–93, 106–126, 150–170, 175–195, 224–244, 257–277, and 302–322; these read VFSI…VAFL, YLFF…WNFM, LLLV…SGWA, LALI…TYIM, FSWF…STLA, FVLF…FSVV, FPIS…VLWV, and IGAL…LPLF.

The protein belongs to the complex I subunit 1 family.

It localises to the mitochondrion inner membrane. The catalysed reaction is a ubiquinone + NADH + 5 H(+)(in) = a ubiquinol + NAD(+) + 4 H(+)(out). Its function is as follows. Core subunit of the mitochondrial membrane respiratory chain NADH dehydrogenase (Complex I) that is believed to belong to the minimal assembly required for catalysis. Complex I functions in the transfer of electrons from NADH to the respiratory chain. The immediate electron acceptor for the enzyme is believed to be ubiquinone. The sequence is that of NADH-ubiquinone oxidoreductase chain 1 (ND1) from Strongylocentrotus purpuratus (Purple sea urchin).